A 166-amino-acid chain; its full sequence is SsrA-binding protein (166 aa).

This sequence belongs to the SmpB family.

Its subcellular location is the cytoplasm. Functionally, required for rescue of stalled ribosomes mediated by trans-translation. Binds to transfer-messenger RNA (tmRNA), required for stable association of tmRNA with ribosomes. tmRNA and SmpB together mimic tRNA shape, replacing the anticodon stem-loop with SmpB. tmRNA is encoded by the ssrA gene; the 2 termini fold to resemble tRNA(Ala) and it encodes a 'tag peptide', a short internal open reading frame. During trans-translation Ala-aminoacylated tmRNA acts like a tRNA, entering the A-site of stalled ribosomes, displacing the stalled mRNA. The ribosome then switches to translate the ORF on the tmRNA; the nascent peptide is terminated with the 'tag peptide' encoded by the tmRNA and targeted for degradation. The ribosome is freed to recommence translation, which seems to be the essential function of trans-translation. The sequence is that of SsrA-binding protein from Parasynechococcus marenigrum (strain WH8102).